Here is a 357-residue protein sequence, read N- to C-terminus: Beta-hexosaminidase (357 aa).

Substrate-binding positions include Asp72, Arg80, Arg146, and 176–177; that span reads KH. His189 functions as the Proton donor/acceptor in the catalytic mechanism. The active-site Nucleophile is Asp260.

The protein belongs to the glycosyl hydrolase 3 family. NagZ subfamily.

The protein localises to the cytoplasm. It carries out the reaction Hydrolysis of terminal non-reducing N-acetyl-D-hexosamine residues in N-acetyl-beta-D-hexosaminides.. The protein operates within cell wall biogenesis; peptidoglycan recycling. Its function is as follows. Plays a role in peptidoglycan recycling by cleaving the terminal beta-1,4-linked N-acetylglucosamine (GlcNAc) from peptide-linked peptidoglycan fragments, giving rise to free GlcNAc, anhydro-N-acetylmuramic acid and anhydro-N-acetylmuramic acid-linked peptides. This chain is Beta-hexosaminidase, found in Hydrogenovibrio crunogenus (strain DSM 25203 / XCL-2) (Thiomicrospira crunogena).